Reading from the N-terminus, the 385-residue chain is Nuclear hormone receptor family member nhr-68 (385 aa).

The nuclear receptor DNA-binding region spans 4–79 (KEVCLVCQDF…VGMDKTSLQA (76 aa)). 2 NR C4-type zinc fingers span residues 7–27 (CLVC…CNGC) and 43–62 (CQFD…CRFC). The disordered stretch occupies residues 81-110 (RDPIGYTKRNKKTLRHPMNELSGDESNSCT). Residues 145 to 384 (PKRSLKQALC…SFAKELIFGD (240 aa)) form the NR LBD domain. Residues 373 to 384 (FTSFAKELIFGD) form an AF-2 region.

This sequence belongs to the nuclear hormone receptor family.

The protein resides in the nucleus. Probable transcription factor that acts in a feed-forward loop with nhr-10 to activate genes, including itself, involved in the vitamin B12-independent breakdown of the short-chain fatty acid propionate. This pathway is triggered in response to a diet low in vitamin B12, when canonical vitamin B12-dependent propionate breakdown cannot function; the resulting accumulation of propionate is probably sensed by nhr-68 and/or nhr-10. This Caenorhabditis elegans protein is Nuclear hormone receptor family member nhr-68.